The chain runs to 88 residues: MAKGQSLQDPFLNALRRERIPVSIYLVNGIKLQGQIESFDQFVILLKNTVNQMVYKHAISTVVPARAVSHHSGEQQRAPSDRPEKTED.

The 60-residue stretch at 9–68 folds into the Sm domain; it reads DPFLNALRRERIPVSIYLVNGIKLQGQIESFDQFVILLKNTVNQMVYKHAISTVVPARAV. Residues 66-88 are disordered; sequence RAVSHHSGEQQRAPSDRPEKTED. The span at 71 to 88 shows a compositional bias: basic and acidic residues; sequence HSGEQQRAPSDRPEKTED.

Belongs to the Hfq family. In terms of assembly, homohexamer.

RNA chaperone that binds small regulatory RNA (sRNAs) and mRNAs to facilitate mRNA translational regulation in response to envelope stress, environmental stress and changes in metabolite concentrations. Also binds with high specificity to tRNAs. The protein is RNA-binding protein Hfq of Vibrio atlanticus (strain LGP32) (Vibrio splendidus (strain Mel32)).